The sequence spans 657 residues: Translation factor GUF1, mitochondrial (657 aa).

A mitochondrion-targeting transit peptide spans 1–39; the sequence is MRGCLQSVKWLTSALRPSQSLASSTRYPRRLLSTSAPRN. Positions 59–239 constitute a tr-type G domain; sequence ERFRNFCIVA…TVIEQIPAPV (181 aa). Residues 109 to 116, 173 to 177, and 227 to 230 each bind GTP; these read TVKAQTCS, LAFAE, and LLPT.

The protein belongs to the TRAFAC class translation factor GTPase superfamily. Classic translation factor GTPase family. LepA subfamily.

It is found in the mitochondrion inner membrane. The catalysed reaction is GTP + H2O = GDP + phosphate + H(+). Functionally, promotes mitochondrial protein synthesis. May act as a fidelity factor of the translation reaction, by catalyzing a one-codon backward translocation of tRNAs on improperly translocated ribosomes. Binds to mitochondrial ribosomes in a GTP-dependent manner. In Ajellomyces capsulatus (strain NAm1 / WU24) (Darling's disease fungus), this protein is Translation factor GUF1, mitochondrial.